A 308-amino-acid chain; its full sequence is tRNA pseudouridine synthase B (308 aa).

Asp47 acts as the Nucleophile in catalysis.

The protein belongs to the pseudouridine synthase TruB family. Type 1 subfamily.

The catalysed reaction is uridine(55) in tRNA = pseudouridine(55) in tRNA. In terms of biological role, responsible for synthesis of pseudouridine from uracil-55 in the psi GC loop of transfer RNAs. This chain is tRNA pseudouridine synthase B, found in Xanthomonas axonopodis pv. citri (strain 306).